Here is a 389-residue protein sequence, read N- to C-terminus: Major outer membrane porin (389 aa).

An N-terminal signal peptide occupies residues 1-23 (MKKLLKSALLSAAFAGSVGSLQA).

It belongs to the chlamydial porin (CP) (TC 1.B.2) family. Part of a disulfide cross-linked outer membrane complex (COMC) composed of the major outer membrane porin (MOMP), the small cysteine-rich protein (OmcA) and the large cysteine-rich periplasmic protein (OmcB).

It is found in the cell outer membrane. Its function is as follows. In elementary bodies (EBs, the infectious stage, which is able to survive outside the host cell) provides the structural integrity of the outer envelope through disulfide cross-links with the small cysteine-rich protein and the large cysteine-rich periplasmic protein. It has been described in publications as the Sarkosyl-insoluble COMC (Chlamydia outer membrane complex), and serves as the functional equivalent of peptidoglycan. Functionally, permits diffusion of specific solutes through the outer membrane. This Chlamydia pneumoniae (Chlamydophila pneumoniae) protein is Major outer membrane porin (ompA).